The following is a 966-amino-acid chain: Regulator of telomere elongation helicase 1 homolog (966 aa).

A Helicase ATP-binding domain is found at 7–284 (AGIPVHFPFE…QDMAGDEPKD (278 aa)). 42–49 (SPTGTGKT) serves as a coordination point for ATP. [4Fe-4S] cluster-binding residues include Cys-146, Cys-164, Cys-173, and Cys-209. The DEAH box motif lies at 233–236 (DEAH). Positions 844–864 (VKIHKRERSSPTAPESTSQVS) are disordered. The segment covering 853-863 (SPTAPESTSQV) has biased composition (polar residues). Thr-855 carries the phosphothreonine modification.

It belongs to the helicase family. RAD3/XPD subfamily.

The protein resides in the nucleus. It catalyses the reaction ATP + H2O = ADP + phosphate + H(+). Its function is as follows. A probable ATP-dependent DNA helicase implicated in DNA repair and the maintenance of genomic stability. Acts as an anti-recombinase to counteract toxic recombination and limit crossover during meiosis. Regulates meiotic recombination and crossover homeostasis by physically dissociating strand invasion events and thereby promotes noncrossover repair by meiotic synthesis dependent strand annealing (SDSA) as well as disassembly of D loop recombination intermediates. This chain is Regulator of telomere elongation helicase 1 homolog, found in Drosophila sechellia (Fruit fly).